The following is a 511-amino-acid chain: ATP synthase subunit alpha (511 aa).

169–176 is an ATP binding site; that stretch reads GDRQTGKT.

This sequence belongs to the ATPase alpha/beta chains family. In terms of assembly, F-type ATPases have 2 components, CF(1) - the catalytic core - and CF(0) - the membrane proton channel. CF(1) has five subunits: alpha(3), beta(3), gamma(1), delta(1), epsilon(1). CF(0) has three main subunits: a(1), b(2) and c(9-12). The alpha and beta chains form an alternating ring which encloses part of the gamma chain. CF(1) is attached to CF(0) by a central stalk formed by the gamma and epsilon chains, while a peripheral stalk is formed by the delta and b chains.

Its subcellular location is the cell inner membrane. The enzyme catalyses ATP + H2O + 4 H(+)(in) = ADP + phosphate + 5 H(+)(out). Its function is as follows. Produces ATP from ADP in the presence of a proton gradient across the membrane. The alpha chain is a regulatory subunit. In Bartonella quintana (strain Toulouse) (Rochalimaea quintana), this protein is ATP synthase subunit alpha.